A 394-amino-acid polypeptide reads, in one-letter code: Protein maelstrom (394 aa).

The segment at residues 2–69 (APKKQNGFMM…ARRDKRGSLN (68 aa)) is a DNA-binding region (HMG box). The interval 44 to 93 (TQQRGPYNSDAKDANAARRDKRGSLNGHGQVDKAQREAAESLMDKAQREA) is disordered. Basic and acidic residues predominate over residues 73–93 (QVDKAQREAAESLMDKAQREA).

Belongs to the maelstrom family.

Its subcellular location is the cytoplasm. The protein localises to the nucleus. In terms of biological role, involved both in the piRNA and miRNA metabolic processes. As a component of the meiotic nuage, plays a central role during oogenesis by repressing transposable elements and preventing their mobilization, which is essential for the germline integrity. Repression of transposable elements is mediated via the piRNA metabolic process, which mediates the repression of transposable elements during meiosis by forming complexes composed of piRNAs and Piwi proteins and governs the repression of transposons. As a nuclear component, it is required for proper differentiation in the germline stem cell (GSC) lineage by repressing microRNA-7 (miR-7), thereby acting as an indirect regulator of bag-of-marbles (Bam). Acts by binding to the promoter of miR-7 gene and repressing its expression; miR-7 repression alleviates the Bam repression by miR-7, thereby allowing differentiation in the germline stem cell (GSC) lineage. The protein is Protein maelstrom (mael) of Drosophila simulans (Fruit fly).